The following is a 271-amino-acid chain: Hematopoietically-expressed homeobox protein Hhex (271 aa).

Positions 1 to 138 (MQFPHPGPAA…PFLQRPLHKR (138 aa)) are interaction with SOX13. Serine 54 is modified (phosphoserine). Residues 138-197 (RKGGQVRFSNDQTVELEKKFETQKYLSPPERKRLAKMLQLSERQVKTWFQNRRAKWRRLK) constitute a DNA-binding region (homeobox). The interval 138–271 (RKGGQVRFSN…EGDKGYFNAG (134 aa)) is required for WNT signaling induction. The interval 195–271 (RLKQENPQSN…EGDKGYFNAG (77 aa)) is disordered. The segment covering 212-242 (LDTSCEQGQDLPSEQNKGASLDRSQCSPSPA) has biased composition (polar residues). Residues 245–261 (EDPDSEISEDSDQEVDI) show a composition bias toward acidic residues.

Interacts with CD81; the interaction prevents nuclear translocation of HHEX. Interacts (via N-terminus) with SOX13; abolishes the SOX13-mediated inhibition of WNT-mediated transcriptional activity via competitive inhibition of the SOX13-TCF7 complex. Interacts with EIF4E; the interaction inhibits EIF4E-mediated mRNA nuclear export.

It is found in the nucleus. The protein resides in the nuclear body. It localises to the cytoplasm. Functionally, recognizes the DNA sequence 5'-ATTAA-3'. Transcriptional repressor. Activator of WNT-mediated transcription in conjunction with CTNNB1. Establishes anterior identity at two levels; acts early to enhance canonical WNT-signaling by repressing expression of TLE4, and acts later to inhibit NODAL-signaling by directly targeting NODAL. Inhibits EIF4E-mediated mRNA nuclear export. May play a role in hematopoietic differentiation. In Mus musculus (Mouse), this protein is Hematopoietically-expressed homeobox protein Hhex (Hhex).